Here is a 465-residue protein sequence, read N- to C-terminus: 6-phospho-beta-glucosidase (465 aa).

Residue Glu-173 is the Proton donor of the active site. The active-site Nucleophile is Glu-362.

It belongs to the glycosyl hydrolase 1 family.

It catalyses the reaction 6-phospho-beta-D-glucosyl-(1-&gt;4)-D-glucose + H2O = D-glucose 6-phosphate + D-glucose. It participates in carbohydrate metabolism; beta-glucoside metabolism. The polypeptide is 6-phospho-beta-glucosidase (arbB) (Dickeya chrysanthemi (Pectobacterium chrysanthemi)).